The primary structure comprises 607 residues: Elongation factor 4 (607 aa).

In terms of domain architecture, tr-type G spans S11–T193. Residues D23–T28 and N140–D143 each bind GTP.

This sequence belongs to the TRAFAC class translation factor GTPase superfamily. Classic translation factor GTPase family. LepA subfamily.

It localises to the cell membrane. It carries out the reaction GTP + H2O = GDP + phosphate + H(+). Its function is as follows. Required for accurate and efficient protein synthesis under certain stress conditions. May act as a fidelity factor of the translation reaction, by catalyzing a one-codon backward translocation of tRNAs on improperly translocated ribosomes. Back-translocation proceeds from a post-translocation (POST) complex to a pre-translocation (PRE) complex, thus giving elongation factor G a second chance to translocate the tRNAs correctly. Binds to ribosomes in a GTP-dependent manner. This is Elongation factor 4 from Bacillus cereus (strain ZK / E33L).